Consider the following 210-residue polypeptide: MADGSSDAAREPRPAPAPIRRRSSNYRAYATEPHAKKKSKISASRKLQLKTLLLQIAKQELEREAEERRGEKGRALSTRCQPLELAGLGFAELQDLCRQLHARVDKVDEERYDIEAKVTKNITEIADLTQKIFDLRGKFKRPTLRRVRISADAMMQALLGARAKESLDLRAHLKQVKKEDTEKENREVGDWRKNIDALSGMEGRKKKFES.

The disordered stretch occupies residues 1–43 (MADGSSDAAREPRPAPAPIRRRSSNYRAYATEPHAKKKSKISA). Alanine 2 is subject to N-acetylalanine. Serine 5 and serine 6 each carry phosphoserine. Residues serine 23 and serine 24 each carry the phosphoserine; by PKA and PKD/PRKD1 modification. Phosphotyrosine is present on tyrosine 26. A Phosphothreonine; by STK4/MST1 modification is found at threonine 31. Residues 32–79 (EPHAKKKSKISASRKLQLKTLLLQIAKQELEREAEERRGEKGRALSTR) are involved in binding TNC. Residues serine 42 and serine 44 each carry the phosphoserine; by PKC/PRKCE modification. Threonine 51 bears the Phosphothreonine; by STK4/MST1 mark. Position 77 is a phosphoserine (serine 77). At threonine 78 the chain carries Phosphothreonine. Threonine 129 and threonine 143 each carry phosphothreonine; by STK4/MST1. The involved in binding TNC and actin stretch occupies residues 129 to 149 (TQKIFDLRGKFKRPTLRRVRI). Position 150 is a phosphoserine; by PAK3 (serine 150). At serine 166 the chain carries Phosphoserine. Position 181 is a phosphothreonine (threonine 181). The residue at position 199 (serine 199) is a Phosphoserine.

The protein belongs to the troponin I family. In terms of assembly, binds to actin and tropomyosin. Interacts with TRIM63. Interacts with STK4/MST1. Phosphorylated at Ser-42 and Ser-44 by PRKCE; phosphorylation increases myocardium contractile dysfunction. Phosphorylated at Ser-23 and Ser-24 by PRKD1; phosphorylation reduces myofilament calcium sensitivity. Phosphorylated preferentially at Thr-31. Phosphorylation by STK4/MST1 alters its binding affinity to TNNC1 (cardiac Tn-C) and TNNT2 (cardiac Tn-T).

Its function is as follows. Troponin I is the inhibitory subunit of troponin, the thin filament regulatory complex which confers calcium-sensitivity to striated muscle actomyosin ATPase activity. The protein is Troponin I, cardiac muscle (TNNI3) of Homo sapiens (Human).